Here is a 304-residue protein sequence, read N- to C-terminus: Foldase protein PrsA (304 aa).

An N-terminal signal peptide occupies residues 1-19 (MKKKLLSVAAVASVFTLAA). Cysteine 20 carries N-palmitoyl cysteine lipidation. A lipid anchor (S-diacylglycerol cysteine) is attached at cysteine 20. The region spanning 140–231 (KVEVKASHIL…FGYHIIKVTD (92 aa)) is the PpiC domain. The disordered stretch occupies residues 285-304 (FDLDKQEQQQMQQQMQQQQQ). Residues 292-304 (QQQMQQQMQQQQQ) show a composition bias toward low complexity.

The protein belongs to the PrsA family.

It localises to the cell membrane. It catalyses the reaction [protein]-peptidylproline (omega=180) = [protein]-peptidylproline (omega=0). Functionally, plays a major role in protein secretion by helping the post-translocational extracellular folding of several secreted proteins. The chain is Foldase protein PrsA from Exiguobacterium sibiricum (strain DSM 17290 / CCUG 55495 / CIP 109462 / JCM 13490 / 255-15).